The following is a 418-amino-acid chain: CinA-like protein (418 aa).

The protein belongs to the CinA family.

The polypeptide is CinA-like protein (Cytophaga hutchinsonii (strain ATCC 33406 / DSM 1761 / CIP 103989 / NBRC 15051 / NCIMB 9469 / D465)).